A 190-amino-acid polypeptide reads, in one-letter code: MAYIAKSFYDLSAIGLDGEKIDFNTFRGRAVLIENVASLUGTTTRDYNQLNELQCRFPRRLVVLGFPCNQFGHQENCQNEEILNSLKYVRPGGGYQPTFSLTQKCDVNGQNEHPVFAYLKDKLPYPYDDPFSLMTDPKLIIWSPVRRSDVSWNFEKFLIGPEGEPFRRYSRSFQTINIEPDIKRLLKVAI.

Selenocysteine 40 is a catalytic residue. Residue selenocysteine 40 is a non-standard amino acid, selenocysteine.

The protein belongs to the glutathione peroxidase family. As to quaternary structure, homotetramer.

Its subcellular location is the cytoplasm. It is found in the cytosol. The enzyme catalyses 2 glutathione + H2O2 = glutathione disulfide + 2 H2O. It catalyses the reaction a hydroperoxy polyunsaturated fatty acid + 2 glutathione = a hydroxy polyunsaturated fatty acid + glutathione disulfide + H2O. It carries out the reaction tert-butyl hydroperoxide + 2 glutathione = tert-butanol + glutathione disulfide + H2O. The catalysed reaction is cumene hydroperoxide + 2 glutathione = 2-phenylpropan-2-ol + glutathione disulfide + H2O. The enzyme catalyses (13S)-hydroperoxy-(9Z,11E)-octadecadienoate + 2 glutathione = (13S)-hydroxy-(9Z,11E)-octadecadienoate + glutathione disulfide + H2O. It catalyses the reaction (5S)-hydroperoxy-(6E,8Z,11Z,14Z)-eicosatetraenoate + 2 glutathione = (5S)-hydroxy-(6E,8Z,11Z,14Z)-eicosatetraenoate + glutathione disulfide + H2O. It carries out the reaction (12R)-hydroperoxy-(5Z,8Z,10E,14Z)-eicosatetraenoate + 2 glutathione = (12R)-hydroxy-(5Z,8Z,10E,14Z)-eicosatetraenoate + glutathione disulfide + H2O. The catalysed reaction is (15S)-hydroperoxy-(5Z,8Z,11Z,13E)-eicosatetraenoate + 2 glutathione = (15S)-hydroxy-(5Z,8Z,11Z,13E)-eicosatetraenoate + glutathione disulfide + H2O. Functionally, catalyzes the reduction of hydroperoxides in a glutathione-dependent manner thus regulating cellular redox homeostasis. Can reduce small soluble hydroperoxides such as H2O2, cumene hydroperoxide and tert-butyl hydroperoxide, as well as several fatty acid-derived hydroperoxides. Cannot reduce phosphatidycholine hydroperoxide. The sequence is that of Glutathione peroxidase 2 (Gpx2) from Mus musculus (Mouse).